The sequence spans 167 residues: Large ribosomal subunit protein uL10 (167 aa).

Belongs to the universal ribosomal protein uL10 family. In terms of assembly, part of the ribosomal stalk of the 50S ribosomal subunit. The N-terminus interacts with L11 and the large rRNA to form the base of the stalk. The C-terminus forms an elongated spine to which L12 dimers bind in a sequential fashion forming a multimeric L10(L12)X complex.

In terms of biological role, forms part of the ribosomal stalk, playing a central role in the interaction of the ribosome with GTP-bound translation factors. The sequence is that of Large ribosomal subunit protein uL10 from Streptococcus thermophilus (strain CNRZ 1066).